Reading from the N-terminus, the 120-residue chain is Large ribosomal subunit protein uL18 (120 aa).

Part of the 50S ribosomal subunit; part of the 5S rRNA/L5/L18/L25 subcomplex. Contacts the 5S and 23S rRNAs.

Functionally, this is one of the proteins that bind and probably mediate the attachment of the 5S RNA into the large ribosomal subunit, where it forms part of the central protuberance. This Rhodopseudomonas palustris (strain ATCC BAA-98 / CGA009) protein is Large ribosomal subunit protein uL18.